A 778-amino-acid polypeptide reads, in one-letter code: Ubiquitin thioesterase trabid (778 aa).

2 RanBP2-type zinc fingers span residues 5–36 (KDDAQKWKCETCTYENYPSSLKCTMCQASKPL) and 89–118 (DSEKWPCKVCTYLNWPRSLRCVQCCTKRGG). Residues 187–197 (ASHNQSQSQHR) are compositionally biased toward polar residues. A disordered region spans residues 187–226 (ASHNQSQSQHRQPVLQQQMQLQLQPQQQRESSSSAAVPPQ). Low complexity predominate over residues 198-226 (QPVLQQQMQLQLQPQQQRESSSSAAVPPQ). Residues 232-261 (YVSKWACNSCTYENWPRSIKCSMCGKTRER) form a RanBP2-type 3 zinc finger. A disordered region spans residues 265–290 (GSQNDLHASSSLNSQEENQQQLQQPN). Residues 273 to 288 (SSSLNSQEENQQQLQQ) show a composition bias toward low complexity. An OTU domain is found at 507 to 665 (MFVLWNRSAG…RGHFSALVPM (159 aa)). The Nucleophile role is filled by Cys-518. Catalysis depends on His-658, which acts as the Proton acceptor. Residues Ser-770, Ser-771, and Ser-775 each carry the phosphoserine modification.

This sequence belongs to the peptidase C64 family. As to quaternary structure, interacts with Apc.

The catalysed reaction is Thiol-dependent hydrolysis of ester, thioester, amide, peptide and isopeptide bonds formed by the C-terminal Gly of ubiquitin (a 76-residue protein attached to proteins as an intracellular targeting signal).. Functionally, positive regulator of the Wnt signaling pathway. Specifically cleaves 'Lys-63'-linked ubiquitin chains. May act by deubiquitinating APC protein, a negative regulator of Wnt-mediated transcription. Required for an efficient wg response, but not for other signaling responses, in the eye. The protein is Ubiquitin thioesterase trabid (trbd) of Drosophila melanogaster (Fruit fly).